A 228-amino-acid polypeptide reads, in one-letter code: Clathrin light chain B (228 aa).

Methionine 1 bears the Blocked amino end (Met) mark. The span at 1–17 (MADDFGFFSSSESGAPE) shows a compositional bias: low complexity. The disordered stretch occupies residues 1–80 (MADDFGFFSS…VNGDVFQEAN (80 aa)). A phosphoserine mark is found at serine 11 and serine 13. The involved in binding clathrin heavy chain stretch occupies residues 92 to 154 (ADRLTQEPES…QVEKNKINNR (63 aa)). Threonine 186 is subject to Phosphothreonine. Residues cysteine 198 and cysteine 208 are joined by a disulfide bond. Lysine 203 is subject to N6-acetyllysine. Serine 216 is subject to Phosphoserine.

The protein belongs to the clathrin light chain family. As to quaternary structure, clathrin coats are formed from molecules containing 3 heavy chains and 3 light chains. Interacts (via N-terminus) with HIP1. Interacts with HIP1R.

It localises to the cytoplasmic vesicle membrane. The protein resides in the membrane. Its subcellular location is the coated pit. Clathrin is the major protein of the polyhedral coat of coated pits and vesicles. This chain is Clathrin light chain B (CLTB), found in Bos taurus (Bovine).